Here is a 420-residue protein sequence, read N- to C-terminus: Exodeoxyribonuclease 7 large subunit (420 aa).

It belongs to the XseA family. As to quaternary structure, heterooligomer composed of large and small subunits.

It is found in the cytoplasm. The enzyme catalyses Exonucleolytic cleavage in either 5'- to 3'- or 3'- to 5'-direction to yield nucleoside 5'-phosphates.. In terms of biological role, bidirectionally degrades single-stranded DNA into large acid-insoluble oligonucleotides, which are then degraded further into small acid-soluble oligonucleotides. The polypeptide is Exodeoxyribonuclease 7 large subunit (Helicobacter pylori (strain ATCC 700392 / 26695) (Campylobacter pylori)).